An 88-amino-acid chain; its full sequence is Long neurotoxin LNTX-1 (88 aa).

The N-terminal stretch at 1–21 (MKTLLLTLVVVTIVCLDFGYA) is a signal peptide. 5 disulfides stabilise this stretch: Cys-24–Cys-42, Cys-35–Cys-63, Cys-48–Cys-52, Cys-67–Cys-78, and Cys-79–Cys-84.

The protein belongs to the three-finger toxin family. Long-chain subfamily. Type II alpha-neurotoxin sub-subfamily. Expressed by the venom gland.

Its subcellular location is the secreted. Functionally, binds with high affinity to muscular (alpha-1/CHRNA1) and neuronal (alpha-7/CHRNA7) nicotinic acetylcholine receptor (nAChR) and inhibits acetylcholine from binding to the receptor, thereby impairing neuromuscular and neuronal transmission. This is Long neurotoxin LNTX-1 from Demansia vestigiata (Lesser black whip snake).